A 1004-amino-acid chain; its full sequence is Ephrin type-A receptor 8 (1004 aa).

Residues methionine 1–alanine 26 form the signal peptide. Residues glycine 27–threonine 541 lie on the Extracellular side of the membrane. The 179-residue stretch at glutamate 30–arginine 208 folds into the Eph LBD domain. Fibronectin type-III domains are found at residues proline 327–alanine 437 and alanine 438–proline 533. Residues asparagine 339, asparagine 406, and asparagine 431 are each glycosylated (N-linked (GlcNAc...) asparagine). A helical membrane pass occupies residues isoleucine 542–cysteine 562. Residues lysine 563–tyrosine 569 form a mediates interaction with ANKS1A and ANKS1B region. Residues lysine 563–leucine 1004 lie on the Cytoplasmic side of the membrane. The tract at residues alanine 588–glycine 643 is mediates interaction with PIK3CG and required for endocytosis. Residue tyrosine 615 is modified to Phosphotyrosine; by autocatalysis. The Protein kinase domain maps to isoleucine 634–valine 895. ATP-binding positions include isoleucine 640–valine 648 and lysine 666. The active-site Proton acceptor is the aspartate 759. Residue tyrosine 838 is modified to Phosphotyrosine; by autocatalysis. The SAM domain occupies asparagine 929–glutamine 993. Positions arginine 1002 to leucine 1004 match the PDZ-binding motif.

It belongs to the protein kinase superfamily. Tyr protein kinase family. Ephrin receptor subfamily. Heterotetramer upon binding of the ligand. The heterotetramer is composed of an ephrin dimer and a receptor dimer. Oligomerization is probably required to induce biological responses. May also form heterodimers with other ephrin receptors. Interacts with FYN; possible downstream effector of EPHA8 in regulation of cell adhesion. Interacts with PIK3CG; regulates integrin-mediated cell adhesion to substrate. Interacts with TIAM1; regulates clathrin-mediated endocytosis of EPHA8. Interacts with ANKS1A and ANKS1B; EPHA8 kinase activity-independent but stimulated by EPHA8 ubiquitination. In terms of processing, phosphorylated. Phosphorylation is stimulated upon binding of its ligands including EFNA2, EFNA3 and EFNA5. Autophosphorylation on Tyr-615 is critical for association with FYN. Autophosphorylation on Tyr-838 modulates tyrosine kinase activity. Post-translationally, ubiquitinated. Ubiquitination by CBL regulates the receptor stability and activity through proteasomal degradation. ANKS1A prevents ubiquitination and degradation. In terms of tissue distribution, specifically expressed in the central nervous system.

Its subcellular location is the cell membrane. It is found in the cell projection. It localises to the early endosome membrane. The enzyme catalyses L-tyrosyl-[protein] + ATP = O-phospho-L-tyrosyl-[protein] + ADP + H(+). Functionally, receptor tyrosine kinase which binds promiscuously GPI-anchored ephrin-A family ligands residing on adjacent cells, leading to contact-dependent bidirectional signaling into neighboring cells. The signaling pathway downstream of the receptor is referred to as forward signaling while the signaling pathway downstream of the ephrin ligand is referred to as reverse signaling. The GPI-anchored ephrin-A EFNA2, EFNA3, and EFNA5 are able to activate EPHA8 through phosphorylation. With EFNA5 may regulate integrin-mediated cell adhesion and migration on fibronectin substrate but also neurite outgrowth. During development of the nervous system also plays a role in axon guidance. Downstream effectors of the EPHA8 signaling pathway include FYN which promotes cell adhesion upon activation by EPHA8 and the MAP kinases in the stimulation of neurite outgrowth. This chain is Ephrin type-A receptor 8 (Epha8), found in Mus musculus (Mouse).